The chain runs to 185 residues: Large ribosomal subunit protein uL5 (185 aa).

The protein belongs to the universal ribosomal protein uL5 family. As to quaternary structure, part of the 50S ribosomal subunit; part of the 5S rRNA/L5/L18/L25 subcomplex. Contacts the 5S rRNA and the P site tRNA. Forms a bridge to the 30S subunit in the 70S ribosome.

This is one of the proteins that bind and probably mediate the attachment of the 5S RNA into the large ribosomal subunit, where it forms part of the central protuberance. In the 70S ribosome it contacts protein S13 of the 30S subunit (bridge B1b), connecting the 2 subunits; this bridge is implicated in subunit movement. Contacts the P site tRNA; the 5S rRNA and some of its associated proteins might help stabilize positioning of ribosome-bound tRNAs. This is Large ribosomal subunit protein uL5 from Streptomyces griseus subsp. griseus (strain JCM 4626 / CBS 651.72 / NBRC 13350 / KCC S-0626 / ISP 5235).